The primary structure comprises 175 residues: Austinoid biosynthesis cluster protein F (175 aa).

This sequence belongs to the trt14 isomerase family. As to quaternary structure, homodimer.

The protein operates within secondary metabolite biosynthesis; terpenoid biosynthesis. Part of the gene cluster that mediates the biosynthesis of calidodehydroaustin, a fungal meroterpenoid. The first step of the pathway is the synthesis of 3,5-dimethylorsellinic acid by the polyketide synthase ausA. 3,5-dimethylorsellinic acid is then prenylated by the polyprenyl transferase ausN. Further epoxidation by the FAD-dependent monooxygenase ausM and cyclization by the probable terpene cyclase ausL lead to the formation of protoaustinoid A. Protoaustinoid A is then oxidized to spiro-lactone preaustinoid A3 by the combined action of the FAD-binding monooxygenases ausB and ausC, and the dioxygenase ausE. Acid-catalyzed keto-rearrangement and ring contraction of the tetraketide portion of preaustinoid A3 by ausJ lead to the formation of preaustinoid A4. The aldo-keto reductase ausK, with the help of ausH, is involved in the next step by transforming preaustinoid A4 into isoaustinone which is in turn hydroxylated by the P450 monooxygenase ausI to form austinolide. The cytochrome P450 monooxygenase ausG modifies austinolide to austinol. Austinol is further acetylated to austin by the O-acetyltransferase ausP, which spontaneously changes to dehydroaustin. The cytochrome P450 monooxygenase ausR then converts dehydroaustin is into 7-dehydrodehydroaustin. The hydroxylation catalyzed by ausR permits the O-acetyltransferase ausQ to add an additional acetyl group to the molecule, leading to the formation of acetoxydehydroaustin. The short chain dehydrogenase ausT catalyzes the reduction of the double bond present between carbon atoms 1 and 2 to convert 7-dehydrodehydroaustin into 1,2-dihydro-7-hydroxydehydroaustin. AusQ catalyzes not only an acetylation reaction but also the addition of the PKS ausV diketide product to 1,2-dihydro-7-hydroxydehydroaustin, forming precalidodehydroaustin. Finally, the iron/alpha-ketoglutarate-dependent dioxygenase converts precalidodehydroaustin into calidodehydroaustin. The sequence is that of Austinoid biosynthesis cluster protein F from Aspergillus calidoustus.